We begin with the raw amino-acid sequence, 88 residues long: Outer membrane protein H.8 (88 aa).

An N-terminal signal peptide occupies residues 1–17; it reads MKKSLFAAALLSLALAA. Cys18 carries the N-palmitoyl cysteine lipid modification. The S-diacylglycerol cysteine moiety is linked to residue Cys18. Repeat copies occupy residues 23–27, 28–32, 33–37, 38–42, 43–47, 48–52, 53–57, 58–62, 63–67, 68–72, 73–77, 78–82, and 83–87. The segment at 23-87 is 13 X 5 AA tandem repeats of [AS]-[AT]-E-A-[PAS]; the sequence is AAEAPAAEAS…AAEAPAAEAA (65 aa). Residues 23–88 are disordered; it reads AAEAPAAEAS…AEAPAAEAAK (66 aa). The segment covering 25 to 88 has biased composition (low complexity); the sequence is EAPAAEASST…AEAPAAEAAK (64 aa).

The protein localises to the cell outer membrane. The polypeptide is Outer membrane protein H.8 (Neisseria gonorrhoeae (strain ATCC 700825 / FA 1090)).